Consider the following 142-residue polypeptide: Large ribosomal subunit protein uL13 (142 aa).

The protein belongs to the universal ribosomal protein uL13 family. As to quaternary structure, part of the 50S ribosomal subunit.

Functionally, this protein is one of the early assembly proteins of the 50S ribosomal subunit, although it is not seen to bind rRNA by itself. It is important during the early stages of 50S assembly. The polypeptide is Large ribosomal subunit protein uL13 (Sodalis glossinidius (strain morsitans)).